We begin with the raw amino-acid sequence, 414 residues long: Diaminopimelate decarboxylase (414 aa).

Residue Lys52 is modified to N6-(pyridoxal phosphate)lysine. Pyridoxal 5'-phosphate-binding positions include Gly231 and 265–268 (EPGR). Substrate is bound by residues Arg268, Arg304, and Tyr308. Catalysis depends on Cys334, which acts as the Proton donor. Glu335 and Tyr362 together coordinate substrate. Tyr362 lines the pyridoxal 5'-phosphate pocket.

It belongs to the Orn/Lys/Arg decarboxylase class-II family. LysA subfamily. Homodimer. It depends on pyridoxal 5'-phosphate as a cofactor.

The enzyme catalyses meso-2,6-diaminopimelate + H(+) = L-lysine + CO2. It functions in the pathway amino-acid biosynthesis; L-lysine biosynthesis via DAP pathway; L-lysine from DL-2,6-diaminopimelate: step 1/1. Functionally, specifically catalyzes the decarboxylation of meso-diaminopimelate (meso-DAP) to L-lysine. The protein is Diaminopimelate decarboxylase of Neisseria meningitidis serogroup B (strain ATCC BAA-335 / MC58).